The chain runs to 956 residues: MAM domain-containing glycosylphosphatidylinositol anchor protein 2 (956 aa).

Positions 1-25 are cleaved as a signal peptide; it reads MDLLYGLVWLLTVLLEGISGQGVYA. Ig-like domains follow at residues 27–127 and 134–232; these read PTVR…IRVD and PVVT…KMVS. Cystine bridges form between C62–C110 and C159–C216. Residues N92, N213, and N237 are each glycosylated (N-linked (GlcNAc...) asparagine). Ig-like domains follow at residues 242–328, 340–436, 442–533, and 540–627; these read PSIK…NIIV, PDPY…VNIS, PNLT…ALVQ, and PAVE…FLVT. Disulfide bonds link C264/C310 and C359/C417. 5 N-linked (GlcNAc...) asparagine glycosylation sites follow: N434, N443, N504, N610, and N703. Intrachain disulfides connect C465–C515 and C561–C611. The 102-residue stretch at 638-739 folds into the Fibronectin type-III domain; it reads DTYNPVWQNR…IRVIKYSAPV (102 aa). The MAM domain occupies 746–921; it reads FHCGFEDGNI…VSIAEGECAK (176 aa). D931 is lipidated: GPI-anchor amidated aspartate. Residues 932-956 constitute a propeptide, removed in mature form; it reads GAVGILVHIWLFPIIVLISILSPRR.

As to quaternary structure, interacts (through the Ig-like domains) with NLGN2. As to expression, detected in Leydig cells, syncytiotrophoblast, duodenal villi epithelial cells and neutrophils from kidney and cutaneous squamous cell carcinoma (at protein level).

The protein localises to the cell membrane. May be involved in cell-cell interactions. The polypeptide is MAM domain-containing glycosylphosphatidylinositol anchor protein 2 (MDGA2) (Homo sapiens (Human)).